We begin with the raw amino-acid sequence, 127 residues long: Large ribosomal subunit protein bL17 (127 aa).

Belongs to the bacterial ribosomal protein bL17 family. Part of the 50S ribosomal subunit. Contacts protein L32.

This chain is Large ribosomal subunit protein bL17, found in Xanthomonas axonopodis pv. citri (strain 306).